We begin with the raw amino-acid sequence, 100 residues long: MELTPREKDKLLLFTAALLAERRKARGLKLNYPEAVALISAAILEGARDGRSVAELMSLGGEVLTRDEVMDGVAEMIPEVQVEATFPDGVKLVTVHEPVR.

It belongs to the urease gamma subunit family. As to quaternary structure, heterotrimer of UreA (gamma), UreB (beta) and UreC (alpha) subunits. Three heterotrimers associate to form the active enzyme.

It localises to the cytoplasm. The enzyme catalyses urea + 2 H2O + H(+) = hydrogencarbonate + 2 NH4(+). It participates in nitrogen metabolism; urea degradation; CO(2) and NH(3) from urea (urease route): step 1/1. This is Urease subunit gamma from Thioalkalivibrio sulfidiphilus (strain HL-EbGR7).